The chain runs to 630 residues: tRNA uridine 5-carboxymethylaminomethyl modification enzyme MnmG (630 aa).

13–18 (GGGHAG) contacts FAD. Position 273-287 (273-287 (GPRYCPSIEDKIHRF)) interacts with NAD(+).

This sequence belongs to the MnmG family. In terms of assembly, homodimer. Heterotetramer of two MnmE and two MnmG subunits. Requires FAD as cofactor.

Its subcellular location is the cytoplasm. In terms of biological role, NAD-binding protein involved in the addition of a carboxymethylaminomethyl (cmnm) group at the wobble position (U34) of certain tRNAs, forming tRNA-cmnm(5)s(2)U34. The chain is tRNA uridine 5-carboxymethylaminomethyl modification enzyme MnmG from Pseudomonas putida (Arthrobacter siderocapsulatus).